The primary structure comprises 429 residues: Glutamate-1-semialdehyde 2,1-aminomutase (429 aa).

The residue at position 264 (Lys264) is an N6-(pyridoxal phosphate)lysine.

The protein belongs to the class-III pyridoxal-phosphate-dependent aminotransferase family. HemL subfamily. Homodimer. Pyridoxal 5'-phosphate is required as a cofactor.

It localises to the cytoplasm. It carries out the reaction (S)-4-amino-5-oxopentanoate = 5-aminolevulinate. Its pathway is porphyrin-containing compound metabolism; protoporphyrin-IX biosynthesis; 5-aminolevulinate from L-glutamyl-tRNA(Glu): step 2/2. The sequence is that of Glutamate-1-semialdehyde 2,1-aminomutase from Campylobacter curvus (strain 525.92).